Here is a 475-residue protein sequence, read N- to C-terminus: MEVSSELLSNGWTSWQRVLLTASLLTCWLLPITAGVTIESVPPKLVEGENVLLRVDNLPENLRVFVWYRGVTDMSLGIALYSLDYSTSVTGPKHSGRETLYRNGSLWIQNVTREDTGYYTLQTISKNGKVVSNTSIFLQVNSSLFICGRPSPPALLTIESVPASVAEGGSVLLLVHSLPDNLQSLLWYKGLTVFNKVEIARHRTVKNSSEMGPAYSGREIVYSNGSLLLQNVTWEDTGFYTLQIVNRYWKMELAHIYLQVDTSLSSCCDDFNSVQLRINPVPPHAAEGERVLLQVHNLPEDVQTFLWYKGVYSTQSFKITEYSIVTESLINGYAHSGREILFINGSLLLQDVTEKDSGFYTLVTIDSNVKVETAHVQVNVNKLVTQPVMRVTDSTVRIQGSVVFTCFSDNTGVSIRWLFNNQNLQLTERMTLSPSKCQLRIHTVRKEDAGEYQCEAFNPVSSKTSLPVRLTVMNE.

The N-terminal stretch at 1–35 is a signal peptide; that stretch reads MEVSSELLSNGWTSWQRVLLTASLLTCWLLPITAG. Ig-like V-type domains lie at 44–140, 162–260, and 280–380; these read KLVE…FLQV, PASV…YLQV, and PVPP…QVNV. N-linked (GlcNAc...) asparagine glycans are attached at residues Asn103, Asn110, and Asn231. An Ig-like C2-type domain is found at 387 to 471; that stretch reads PVMRVTDSTV…SKTSLPVRLT (85 aa). Cys406 and Cys454 are oxidised to a cystine.

Belongs to the immunoglobulin superfamily. CEA family.

It localises to the secreted. In terms of biological role, may have an angiogenic function during early placental development. Binds to cell-surface heparan sulfate proteoglycans (HSPGs), and stimulates secretion of the proangiogenic factors VEGFA and TGFB from uterine dendritic cells and natural killer cells. Also induces endothelial tube formation in vitro. The polypeptide is Pregnancy-specific glycoprotein 22 (Mus musculus (Mouse)).